Here is a 1077-residue protein sequence, read N- to C-terminus: Receptor-type guanylate cyclase daf-11 (1077 aa).

Asparagine 14, asparagine 112, asparagine 149, and asparagine 311 each carry an N-linked (GlcNAc...) asparagine glycan. A helical membrane pass occupies residues 335-355 (TGVIIAIAVIMGVLLMFIIIL). The region spanning 355-695 (LTTIRKCCNG…LARKIIDTVL (341 aa)) is the Protein kinase domain. The Cytoplasmic portion of the chain corresponds to 356–1077 (TTIRKCCNGS…DSQASTIPDN (722 aa)). The Guanylate cyclase domain occupies 765 to 895 (TILYSDIVGF…EAVILASKME (131 aa)). Mg(2+)-binding residues include aspartate 770, isoleucine 771, and aspartate 814. A coiled-coil region spans residues 983 to 1034 (KDKMTLAKEKVIAERKNEEERLQRQQTLQEALEEHEEEIEMNEVLVDEDEGE). Positions 1048–1077 (TQMEELEDEPAGRTIGHGRLDSQASTIPDN) are disordered.

It belongs to the adenylyl cyclase class-4/guanylyl cyclase family. In terms of tissue distribution, expressed in sensory neurons including ASI, ASJ, ASK, AWB and AWC. Expressed in ASJ neurons in the dauer stage.

It is found in the cell membrane. Its subcellular location is the cell projection. It localises to the dendrite. The protein localises to the cilium. The protein resides in the perikaryon. It catalyses the reaction GTP = 3',5'-cyclic GMP + diphosphate. Its function is as follows. Guanylate cyclase involved in the production of the second messenger cGMP. In addition, regulates cGMP levels by controlling the transcription of 3',5'-cyclic phosphodiesterase pde-1 and pde-5 mRNAs. Involved in the olfactory, light and pheromone sensing pathways. Part of the chemosensory mechanism of the ASJ sensory neuron that controls dauer formation and dauer recovery. Promotes the calcium flux in ASJ sensory neurons in response to onset and removal of a nitric oxide (NO) stimulus and is thereby required for the behavioral avoidance response to NO-producing organisms like P.aeruginosa. In ASI and ASJ sensory neurons, controls dauer formation and behavioral response to P.aeruginosa by up-regulating the transcription of daf-7, a member of the TGF-beta family. Required for the chemotaxis responses to non-volatile and volatile attractants mediated by the sensory neurons ASE and AWC respectively. Required in ASJ neurons for phototransduction downstream of G protein coupled-photoreceptor lite-1. Plays a role in the development of ASJ sensory neuron axons during late larval stages and in the maintenance of normal axon morphology in adults. Required to maintain the expression of putative olfactory receptor str-2 in one of the two AWC neurons in adults. Regulates, via the production of cGMP, lifespan (in some environmental conditions), sensitivity to oxidative stress and entry into quiescence triggered by satiety. In AWB and AWC sensory neurons, mediates the recognition of food odors which subsequently allows for the detection of preferred food sources. The sequence is that of Receptor-type guanylate cyclase daf-11 from Caenorhabditis elegans.